A 465-amino-acid polypeptide reads, in one-letter code: Interferon-inducible GTPase 5 (465 aa).

In terms of domain architecture, IRG-type G spans 53–235 (TRLEVGVTGE…PLLMSTWERD (183 aa)). Residues 62–69 (ESGAGKSS), 87–91 (TGVVE), 169–171 (KVD), and 216–218 (SNL) each bind GTP. Phosphoserine occurs at positions 247 and 304. A disordered region spans residues 405–438 (EEEEDTQPDVSLEAAGDNGVEKRGSGEGSMEEAP).

The protein belongs to the TRAFAC class dynamin-like GTPase superfamily. IRG family.

Its subcellular location is the cell projection. It is found in the cilium. The protein resides in the flagellum. It localises to the lipid droplet. The catalysed reaction is GTP + H2O = GDP + phosphate + H(+). Functionally, required for sperm motility and therefore male fertility, via positive regulation of spermatozoa fibrous sheath formation. In Bos taurus (Bovine), this protein is Interferon-inducible GTPase 5 (IRGC).